A 35-amino-acid polypeptide reads, in one-letter code: Tau-theraphotoxin-Pc1b (35 aa).

Disulfide bonds link Cys-3-Cys-17, Cys-10-Cys-22, and Cys-16-Cys-29. Phe-35 carries the phenylalanine amide modification.

The protein belongs to the neurotoxin 10 (Hwtx-1) family. 62 (Vatx) subfamily. As to expression, expressed by the venom gland.

The protein localises to the secreted. Its function is as follows. Selectively activates the mammalian capsaicin receptor TRPV1, a non-selective cation channel expressed by sensory neurons of the pain pathway. Is more potent than VaTx1, but less potent than VaTx3. Interacts with distinct regions of the channel than capsaicin, since it only acts on the extracellular face of the channel, and capsaicin binds to the cytosolic side. Also activates avian TRPV1, which is insensitive to capsaicin. Produce weak inhibition on potassium channels Kv2.1/KCNB1. The chain is Tau-theraphotoxin-Pc1b from Psalmopoeus cambridgei (Trinidad chevron tarantula).